Here is a 329-residue protein sequence, read N- to C-terminus: DNA-directed RNA polymerase subunit alpha (329 aa).

The tract at residues 1-235 (MQNSIMDFLR…EQLEAFVDLR (235 aa)) is alpha N-terminal domain (alpha-NTD). Positions 249 to 329 (FEPILLRPVD…NWPPSSILDE (81 aa)) are alpha C-terminal domain (alpha-CTD).

It belongs to the RNA polymerase alpha chain family. Homodimer. The RNAP catalytic core consists of 2 alpha, 1 beta, 1 beta' and 1 omega subunit. When a sigma factor is associated with the core the holoenzyme is formed, which can initiate transcription.

It catalyses the reaction RNA(n) + a ribonucleoside 5'-triphosphate = RNA(n+1) + diphosphate. In terms of biological role, DNA-dependent RNA polymerase catalyzes the transcription of DNA into RNA using the four ribonucleoside triphosphates as substrates. In Buchnera aphidicola subsp. Acyrthosiphon pisum (strain APS) (Acyrthosiphon pisum symbiotic bacterium), this protein is DNA-directed RNA polymerase subunit alpha.